Consider the following 116-residue polypeptide: Large ribosomal subunit protein bL19 (116 aa).

The protein belongs to the bacterial ribosomal protein bL19 family.

Functionally, this protein is located at the 30S-50S ribosomal subunit interface and may play a role in the structure and function of the aminoacyl-tRNA binding site. The polypeptide is Large ribosomal subunit protein bL19 (rplS) (Streptomyces lividans).